Consider the following 327-residue polypeptide: Phenylalanine--tRNA ligase alpha subunit (327 aa).

Glu-252 contributes to the Mg(2+) binding site.

The protein belongs to the class-II aminoacyl-tRNA synthetase family. Phe-tRNA synthetase alpha subunit type 1 subfamily. As to quaternary structure, tetramer of two alpha and two beta subunits. Mg(2+) serves as cofactor.

The protein resides in the cytoplasm. The enzyme catalyses tRNA(Phe) + L-phenylalanine + ATP = L-phenylalanyl-tRNA(Phe) + AMP + diphosphate + H(+). The chain is Phenylalanine--tRNA ligase alpha subunit from Shewanella sp. (strain MR-7).